A 377-amino-acid chain; its full sequence is Ribosomal RNA large subunit methyltransferase G (377 aa).

Belongs to the methyltransferase superfamily. RlmG family.

Its subcellular location is the cytoplasm. The enzyme catalyses guanosine(1835) in 23S rRNA + S-adenosyl-L-methionine = N(2)-methylguanosine(1835) in 23S rRNA + S-adenosyl-L-homocysteine + H(+). Its function is as follows. Specifically methylates the guanine in position 1835 (m2G1835) of 23S rRNA. The protein is Ribosomal RNA large subunit methyltransferase G of Shewanella sp. (strain MR-4).